We begin with the raw amino-acid sequence, 370 residues long: DNA replication and repair protein RecF (370 aa).

30–37 provides a ligand contact to ATP; that stretch reads GENAQGKT.

It belongs to the RecF family.

Its subcellular location is the cytoplasm. In terms of biological role, the RecF protein is involved in DNA metabolism; it is required for DNA replication and normal SOS inducibility. RecF binds preferentially to single-stranded, linear DNA. It also seems to bind ATP. The sequence is that of DNA replication and repair protein RecF from Bacillus velezensis (strain DSM 23117 / BGSC 10A6 / LMG 26770 / FZB42) (Bacillus amyloliquefaciens subsp. plantarum).